The following is a 672-amino-acid chain: Beta-galactosidase bgaB (672 aa).

Substrate is bound at residue arginine 109. Zn(2+) is bound at residue cysteine 113. Asparagine 147 is a binding site for substrate. Glutamate 148 (proton donor) is an active-site residue. Positions 156, 158, and 161 each coordinate Zn(2+). Catalysis depends on glutamate 303, which acts as the Nucleophile. Substrate is bound by residues tryptophan 311 and 351 to 354 (EKFH).

It belongs to the glycosyl hydrolase 42 family.

The catalysed reaction is Hydrolysis of terminal non-reducing beta-D-galactose residues in beta-D-galactosides.. By divalent metal ions. Fe(2+), Zn(2+), Cu(2+), Pb(2+) and Sn(2+) inhibit 52, 76.6, 85.3, 100 and 100% of the enzyme activity, respectively. Other metal cations and EDTA do not inhibit this enzyme. Thiol reagents 2-mercaptoethanol and dithiothreitol have no effect on the activity. Sulfhydryl group-blocking reagents p-chloromercuribenzoic acid and iodoacetic acid inhibit 86.2 and 74% of the enzyme activity, respectively. In terms of biological role, hydrolyzes 6-bromo-2-naphthyl-beta-D-galactopyranoside and o-nitrophenyl-beta-D-galactopyranoside (ONPG). Possesses a high level of transgalactosylation activity. Hydrolyzes lactose in milk. The protein is Beta-galactosidase bgaB (bgaB) of Geobacillus kaustophilus.